The chain runs to 436 residues: Divalent metal cation transporter MntH (436 aa).

The span at 1–22 (MDSRSPSLPDDRPDPPEQHLDA) shows a compositional bias: basic and acidic residues. Positions 1–31 (MDSRSPSLPDDRPDPPEQHLDARAGATLRGT) are disordered. A run of 11 helical transmembrane segments spans residues 40-60 (ILPF…PGNF), 71-91 (GYSL…IQNL), 115-135 (LVWF…LAEF), 144-164 (LLTG…TFWL), 177-197 (LAVG…VVLA), 216-236 (GSAY…VIYL), 264-284 (VIAA…VAAA), 304-324 (LTPL…LASG), 354-374 (LITM…SSVL), 375-395 (ILSQ…LLLF), and 411-431 (FTVI…YLLW).

Belongs to the NRAMP family.

The protein resides in the cell membrane. H(+)-stimulated, divalent metal cation uptake system. The polypeptide is Divalent metal cation transporter MntH (Deinococcus radiodurans (strain ATCC 13939 / DSM 20539 / JCM 16871 / CCUG 27074 / LMG 4051 / NBRC 15346 / NCIMB 9279 / VKM B-1422 / R1)).